A 549-amino-acid polypeptide reads, in one-letter code: Glucose-6-phosphate isomerase (549 aa).

The active-site Proton donor is the glutamate 355. Active-site residues include histidine 386 and lysine 514.

Belongs to the GPI family.

It localises to the cytoplasm. The catalysed reaction is alpha-D-glucose 6-phosphate = beta-D-fructose 6-phosphate. It functions in the pathway carbohydrate biosynthesis; gluconeogenesis. It participates in carbohydrate degradation; glycolysis; D-glyceraldehyde 3-phosphate and glycerone phosphate from D-glucose: step 2/4. Functionally, catalyzes the reversible isomerization of glucose-6-phosphate to fructose-6-phosphate. In Desulfatibacillum aliphaticivorans, this protein is Glucose-6-phosphate isomerase.